An 834-amino-acid chain; its full sequence is ATP-dependent RNA helicase ddx23 (834 aa).

Disordered regions lie at residues 1–245 and 322–371; these read MDPP…TQFS and FGGY…GKQI. The segment covering 10 to 25 has biased composition (basic and acidic residues); it reads SKRDTKKKDEVNKEQP. Polar residues predominate over residues 42-54; the sequence is SNPTQEEPTNTLQ. Composition is skewed to basic and acidic residues over residues 70–110, 117–164, 171–205, and 231–245; these read GLKE…DYRD, GRDR…RRDG, RRRD…RDND, and DIHK…TQFS. The span at 328 to 362 shows a compositional bias: low complexity; sequence NNNNNGNHYNGNIYNNNNNNNNNNNNNNNINNNNN. The Q motif motif lies at 413–441; that stretch reads RTWQESNLPREILEAIRQLGYEKPSPIQM. In terms of domain architecture, Helicase ATP-binding spans 444 to 643; sequence IPISLTGRDI…KKYLRRPCTI (200 aa). Position 457–464 (457–464) interacts with ATP; sequence AETGSGKT. The DEAD box motif lies at 570–573; the sequence is DEAD. A Helicase C-terminal domain is found at 654–815; sequence RIRQTVIFVK…IVPIELLKHP (162 aa). Positions 813 to 834 are disordered; that stretch reads KHPSSQQKHGSSKDHNKSVIFK. The segment covering 823 to 834 has biased composition (basic and acidic residues); that stretch reads SSKDHNKSVIFK.

Belongs to the DEAD box helicase family. DDX23/PRP28 subfamily.

It localises to the cytoplasm. It is found in the nucleus. It carries out the reaction ATP + H2O = ADP + phosphate + H(+). Probable ATP-dependent RNA helicase which may be involved in mRNA splicing. The chain is ATP-dependent RNA helicase ddx23 (helB2) from Dictyostelium discoideum (Social amoeba).